Reading from the N-terminus, the 483-residue chain is Protein hedgehog (483 aa).

Residues 1–19 form the signal peptide; the sequence is MDNQTVAAIWSCASATCLS. The propeptide occupies 20–92; it reads LDAKRHSVET…LALNFRHAHS (73 aa). The disordered stretch occupies residues 28–57; sequence ETNTNDRQAPPGLSNSNNNNNNNKSTAVDA. A compositionally biased stretch (low complexity) spans 41–50; the sequence is SNSNNNNNNN. Residue Cys-93 is the site of N-palmitoyl cysteine attachment. Ca(2+) contacts are provided by Glu-157, Glu-158, Asp-163, Thr-193, Glu-194, Asp-197, and Asp-199. Gly-266 carries Cholesterol glycine ester lipidation.

Belongs to the hedgehog family. In terms of assembly, interacts with shf. The C-terminal part of the hedgehog protein precursor displays an autoproteolysis activity that results in the cleavage of the full-length protein into two parts (N-product and C-product). In addition, the C-terminal part displays a cholesterol transferase activity that results by the covalent attachment of a cholesterol moiety to the C-terminal of the newly generated N-product. The N-product is the active species in both local and long-range signaling, whereas the C-product has no signaling activity. In terms of processing, cholesterylation is required for N-product targeting to lipid rafts and multimerization. Post-translationally, N-palmitoylation by Rasp of the hedgehog N-product, within the secretory pathway, is required for the embryonic and larval patterning activities of the hedgehog signal.

The protein localises to the nucleus. It is found in the cytoplasm. It localises to the cell membrane. The catalysed reaction is glycyl-L-cysteinyl-[protein] + cholesterol + H(+) = [protein]-C-terminal glycyl cholesterol ester + N-terminal L-cysteinyl-[protein]. Its function is as follows. The C-terminal part of the hedgehog protein precursor displays an autoproteolysis activity that results in the cleavage of the full-length protein into two parts (N-product and C-product). In addition, the C-terminal part displays a cholesterol transferase activity that results by the covalent attachment of a cholesterol moiety to the C-terminal of the newly generated N-product. Once cleaved, the C-product has no signaling activity and diffuses from the cell. In terms of biological role, the dually lipidated hedgehog protein N-product is a morphogen which is essential for a variety of patterning events during development. Establishes the anterior-posterior axis of the embryonic segments and patterns the larval imaginal disks. Binds to the patched (ptc) receptor, which functions in association with smoothened (smo), to activate the transcription of target genes wingless (wg), decapentaplegic (dpp) and ptc. In the absence of hh, ptc represses the constitutive signaling activity of smo through fused (fu). Essential component of a signaling pathway which regulates the Duox-dependent gut immune response to bacterial uracil; required to activate Cad99C-dependent endosome formation, norpA-dependent Ca2+ mobilization and p38 MAPK, which are essential steps in the Duox-dependent production of reactive oxygen species (ROS) in response to intestinal bacterial infection. During photoreceptor differentiation, it up-regulates transcription of Ubr3, which in turn promotes the hh-signaling pathway by mediating the ubiquitination and degradation of cos. This Drosophila virilis (Fruit fly) protein is Protein hedgehog.